Reading from the N-terminus, the 380-residue chain is QRFP-like peptide receptor (380 aa).

The Extracellular segment spans residues 1–51 (MMLGNMTFTQTILHELLRQHNMTKNEFIERFGLPPLVYVPELSPGAKTVTL). 2 N-linked (GlcNAc...) asparagine glycosylation sites follow: asparagine 5 and asparagine 21. A helical transmembrane segment spans residues 52-72 (VFYVIIFLAALLGNTLVVVVV). Topologically, residues 73–83 (WKNKVMRTTMN) are cytoplasmic. The chain crosses the membrane as a helical span at residues 84-104 (IFICSLAASDLLITIVCIPVT). Over 105 to 122 (LMQNMLQNWIMGDFMCKL) the chain is Extracellular. Cysteines 120 and 203 form a disulfide. Residues 123 to 143 (VPFIQTIAVASSILTLTGIAI) form a helical membrane-spanning segment. At 144 to 164 (ERYYAIIHPLKVKYLLSKTRA) the chain is on the cytoplasmic side. The chain crosses the membrane as a helical span at residues 165–185 (GIILALVWVVSVGVATPMLFV). Topologically, residues 186-216 (HKAEEIHDFLYEQRFVTCQEKWWGQTQQTSY) are extracellular. A helical transmembrane segment spans residues 217–237 (TIFNLVVLFIIPLLTMTSLYI). Topologically, residues 238-269 (RIAHRLWVQQPVGVTGNFAHGNSVRRKRQAVK) are cytoplasmic. The helical transmembrane segment at 270 to 290 (MLVVVVLLFAVCWLPYHTVTV) threads the bilayer. Residues 291 to 305 (MNELTGLRLEEKSAK) lie on the Extracellular side of the membrane. A helical membrane pass occupies residues 306-326 (LLIAIVQLIAFSNSFNNPVVY). Over 327–380 (AILNENFKKNFMTMLRCRVNRVSPQQVTPNTLQTPLEQSTRSCRLPAGAPNQQI) the chain is Cytoplasmic.

It belongs to the G-protein coupled receptor 1 family.

The protein resides in the cell membrane. Functionally, receptor for QRFP-like peptide. The activity of this receptor is mediated by G proteins which activate a phosphatidyl-inositol-calcium second messenger system. The sequence is that of QRFP-like peptide receptor from Branchiostoma floridae (Florida lancelet).